Reading from the N-terminus, the 54-residue chain is Large ribosomal subunit protein eL37 (54 aa).

The Zn(2+) site is built by Cys20, Cys23, Cys35, and Cys38. The segment at 20–38 (CRRCGHHTYNVRTKRCSHC) adopts a C4-type zinc-finger fold.

Belongs to the eukaryotic ribosomal protein eL37 family. Zn(2+) is required as a cofactor.

In terms of biological role, binds to the 23S rRNA. The polypeptide is Large ribosomal subunit protein eL37 (rpl37e) (Thermoplasma acidophilum (strain ATCC 25905 / DSM 1728 / JCM 9062 / NBRC 15155 / AMRC-C165)).